The chain runs to 94 residues: Small polypeptide ROTUNDIFOLIA LIKE 1 (94 aa).

Polar residues predominate over residues 1 to 13; sequence MRQCASASSSTSR. The segment at 1 to 26 is disordered; the sequence is MRQCASASSSTSRPPEAAGEEGKRRR. A required for DVL/RTFL small polypeptide activity region spans residues 28-59; sequence RRGWLLQAAAREQRSRFYIFRRCVAMLLCWYK. Residues 63–82 traverse the membrane as a helical segment; that stretch reads ITPYNVVPLGIYGLVWFATM.

This sequence belongs to the DVL/RTFL small polypeptides family.

The protein resides in the cell membrane. Functionally, small polypeptide acting as a regulatory molecule which coordinates cellular responses required for differentiation, growth and development, probably by restricting polar cell proliferation in lateral organs. In Oryza sativa subsp. japonica (Rice), this protein is Small polypeptide ROTUNDIFOLIA LIKE 1.